Reading from the N-terminus, the 107-residue chain is High mobility group protein HMG-I/HMG-Y (107 aa).

The span at 1–13 shows a compositional bias: polar residues; that stretch reads MSESVSKSSQPLA. Residues 1–107 are disordered; that stretch reads MSESVSKSSQ…ISQESSEEEQ (107 aa). S2 carries the N-acetylserine modification. K7 carries the post-translational modification N6-acetyllysine. Residue S8 is modified to ADP-ribosylserine. S9 is modified (ADP-ribosylserine; alternate). S9 carries the post-translational modification Phosphoserine; alternate. An N6-acetyllysine; alternate modification is found at K15. K15 participates in a covalent cross-link: Glycyl lysine isopeptide (Lys-Gly) (interchain with G-Cter in SUMO2); alternate. The segment covering 15 to 24 has biased composition (basic and acidic residues); it reads KQEKDGTEKR. Positions 21–31 form a DNA-binding region, a.T hook 1; that stretch reads TEKRGRGRPRK. The residue at position 26 (R26) is an Asymmetric dimethylarginine; alternate. R26 is subject to Omega-N-methylarginine; alternate. R26 is modified (symmetric dimethylarginine; alternate). Position 36 is a phosphoserine; by HIPK2 and CDC2 (S36). T39 bears the Phosphothreonine mark. S44 and S49 each carry phosphoserine. The residue at position 53 (T53) is a Phosphothreonine; by HIPK2 and CDC2. DNA-binding regions (a.T hook) lie at residues 53 to 63 and 78 to 89; these read TPKRPRGRPKG and TPGRKPRGRPKK. Residues 53 to 77 are interaction with HIPK2; that stretch reads TPKRPRGRPKGSKNKGTAKTRKVTT. The segment covering 55-74 has biased composition (basic residues); that stretch reads KRPRGRPKGSKNKGTAKTRK. An asymmetric dimethylarginine; by PRMT6; alternate mark is found at R58 and R60. Residues R58 and R60 each carry the omega-N-methylarginine; by PRMT6; alternate modification. T78 is subject to Phosphothreonine; by HIPK2 and CDC2. The span at 93 to 107 shows a compositional bias: acidic residues; the sequence is EEEEGISQESSEEEQ. S99, S102, and S103 each carry phosphoserine.

This sequence belongs to the HMGA family. Interacts with HIPK2. Isoforms HMG-I and HMG-Y can be phosphorylated by HIPK2. Phosphorylation may modulate DNA-binding affinity. Post-translationally, methylation at Arg-58 is mutually exclusive with methylation at Arg-60.

Its subcellular location is the nucleus. It is found in the chromosome. HMG-I/Y bind preferentially to the minor groove of A+T rich regions in double-stranded DNA. It is suggested that these proteins could function in nucleosome phasing and in the 3'-end processing of mRNA transcripts. They are also involved in the transcription regulation of genes containing, or in close proximity to A+T-rich regions. The sequence is that of High mobility group protein HMG-I/HMG-Y (Hmga1) from Rattus norvegicus (Rat).